Here is a 229-residue protein sequence, read N- to C-terminus: 7-cyano-7-deazaguanine synthase (229 aa).

Residue L15–L25 coordinates ATP. Zn(2+) contacts are provided by C192, C202, C205, and C208.

Belongs to the QueC family. Zn(2+) serves as cofactor.

It carries out the reaction 7-carboxy-7-deazaguanine + NH4(+) + ATP = 7-cyano-7-deazaguanine + ADP + phosphate + H2O + H(+). The protein operates within purine metabolism; 7-cyano-7-deazaguanine biosynthesis. Its function is as follows. Catalyzes the ATP-dependent conversion of 7-carboxy-7-deazaguanine (CDG) to 7-cyano-7-deazaguanine (preQ(0)). In Acinetobacter baylyi (strain ATCC 33305 / BD413 / ADP1), this protein is 7-cyano-7-deazaguanine synthase.